The chain runs to 182 residues: Transcription termination/antitermination protein NusG (182 aa).

The protein belongs to the NusG family.

Functionally, participates in transcription elongation, termination and antitermination. The protein is Transcription termination/antitermination protein NusG of Chlamydia muridarum (strain MoPn / Nigg).